Consider the following 438-residue polypeptide: Glutamyl-tRNA reductase (438 aa).

Substrate-binding positions include 49-52 (TCNR), S109, 114-116 (EGQ), and Q120. C50 functions as the Nucleophile in the catalytic mechanism. 197–202 (GAGKMS) is a binding site for NADP(+).

It belongs to the glutamyl-tRNA reductase family. Homodimer.

It carries out the reaction (S)-4-amino-5-oxopentanoate + tRNA(Glu) + NADP(+) = L-glutamyl-tRNA(Glu) + NADPH + H(+). Its pathway is porphyrin-containing compound metabolism; protoporphyrin-IX biosynthesis; 5-aminolevulinate from L-glutamyl-tRNA(Glu): step 1/2. The protein operates within porphyrin-containing compound metabolism; chlorophyll biosynthesis. Its function is as follows. Catalyzes the NADPH-dependent reduction of glutamyl-tRNA(Glu) to glutamate 1-semialdehyde (GSA). This Synechococcus elongatus (strain ATCC 33912 / PCC 7942 / FACHB-805) (Anacystis nidulans R2) protein is Glutamyl-tRNA reductase.